The chain runs to 440 residues: COP9 signalosome complex subunit 5 (440 aa).

One can recognise an MPN domain in the interval 71–218; sequence VLISKLSCEK…MGAFRTIESK (148 aa). Residues H164, H166, and D177 each coordinate Zn(2+). Residues 164–177 carry the JAMM motif motif; the sequence is HSHPGYDCWLSNID. The segment covering 319-341 has biased composition (polar residues); that stretch reads TQRGDSTETSSFGSMFSGDNTSD. Disordered regions lie at residues 319-343 and 376-400; these read TQRG…SDVD and SRST…HDEG.

The protein belongs to the peptidase M67A family. CSN5 subfamily. Component of a COP9 signalosome-like (CSN) complex, composed of at least RRI1/CSN5, CSN9, RRI2/CSN10, PCI8/CSN11, CSN12 and CSI1. Within this complex it probably interacts directly with CSN12. Also interacts with RPN5. A divalent metal cation is required as a cofactor.

Its subcellular location is the cytoplasm. It is found in the nucleus. Its function is as follows. Catalytic component of the COP9 signalosome (CSN) complex that acts as an regulator of the ubiquitin (Ubl) conjugation pathway by mediating the deneddylation of the cullin subunit of SCF-type E3 ubiquitin-protein ligase complexes. The CSN complex is involved in the regulation of the mating pheromone response. The protein is COP9 signalosome complex subunit 5 (RRI1) of Saccharomyces cerevisiae (strain YJM789) (Baker's yeast).